The chain runs to 376 residues: Chaperone protein DnaJ (376 aa).

One can recognise a J domain in the interval 5 to 70; the sequence is DYYEVLGVKK…QKRAAYDQYG (66 aa). A CR-type zinc finger spans residues 131–209; that stretch reads GVTKEIRIPT…CHGHGRVEKS (79 aa). Residues cysteine 144, cysteine 147, cysteine 161, cysteine 164, cysteine 183, cysteine 186, cysteine 197, and cysteine 200 each coordinate Zn(2+). CXXCXGXG motif repeat units follow at residues 144-151, 161-168, 183-190, and 197-204; these read CDVCHGSG, CSTCRGAG, CPTCHGSG, and CNKCHGHG.

It belongs to the DnaJ family. As to quaternary structure, homodimer. The cofactor is Zn(2+).

The protein localises to the cytoplasm. Its function is as follows. Participates actively in the response to hyperosmotic and heat shock by preventing the aggregation of stress-denatured proteins and by disaggregating proteins, also in an autonomous, DnaK-independent fashion. Unfolded proteins bind initially to DnaJ; upon interaction with the DnaJ-bound protein, DnaK hydrolyzes its bound ATP, resulting in the formation of a stable complex. GrpE releases ADP from DnaK; ATP binding to DnaK triggers the release of the substrate protein, thus completing the reaction cycle. Several rounds of ATP-dependent interactions between DnaJ, DnaK and GrpE are required for fully efficient folding. Also involved, together with DnaK and GrpE, in the DNA replication of plasmids through activation of initiation proteins. This is Chaperone protein DnaJ from Yersinia enterocolitica serotype O:8 / biotype 1B (strain NCTC 13174 / 8081).